A 901-amino-acid polypeptide reads, in one-letter code: Vacuolar import and degradation protein 22 (901 aa).

Positions 1–10 are enriched in polar residues; sequence MRAMDTQVQS. A disordered region spans residues 1–54; that stretch reads MRAMDTQVQSAERGLVLPPMNSTVSSATAATTATNTDTDTDGDRDEERESLAED. Residue N21 is glycosylated (N-linked (GlcNAc...) asparagine). The span at 27–37 shows a compositional bias: low complexity; that stretch reads ATAATTATNTD. Residues 66–122 form a BED-type zinc finger; the sequence is RDRSRYLGHFLGVDKMLEAVKCKYCGVIIRRQGNSISMAEASQTHLWSTHKIDPNAN. The Zn(2+) site is built by C87, C90, H110, and H115. 2 N-linked (GlcNAc...) asparagine glycosylation sites follow: N242 and N291. A helical transmembrane segment spans residues 381-401; that stretch reads YYHNCIISIINSAILPLFGTP. N-linked (GlcNAc...) asparagine glycosylation is found at N540, N645, N649, N652, N662, N669, N673, N688, and N722. Positions 646-677 are enriched in low complexity; the sequence is NSHNTSNHSNMNIHTDNQTNNINNRSGNNSDN. The disordered stretch occupies residues 646–727; that stretch reads NSHNTSNHSN…NSNNNLSFGS (82 aa). Positions 679 to 688 are enriched in basic and acidic residues; the sequence is DNEHDNDNDN. Low complexity predominate over residues 718–727; it reads NSNNNLSFGS.

Belongs to the VID22 family. Glycosylated.

Its subcellular location is the cell membrane. The protein resides in the nucleus. Its function is as follows. Has a role in the negative regulation of gluconeogenesis. Imports fructose-1,6-bisphosphatase (FBPase) into the intermediate vacuole import and degradation (Vid) vesicles. This is an indirect role and requires cyclophilin A. This is Vacuolar import and degradation protein 22 (VID22) from Saccharomyces cerevisiae (strain ATCC 204508 / S288c) (Baker's yeast).